Reading from the N-terminus, the 129-residue chain is Lysozyme C-1/C-2 (129 aa).

One can recognise a C-type lysozyme domain in the interval 1-129; that stretch reads KVFERCELAR…VSSYVEGCTL (129 aa). Disulfide bonds link C6–C127, C30–C115, C65–C81, and C77–C95. Catalysis depends on residues E35 and D53.

This sequence belongs to the glycosyl hydrolase 22 family. In terms of assembly, monomer.

It carries out the reaction Hydrolysis of (1-&gt;4)-beta-linkages between N-acetylmuramic acid and N-acetyl-D-glucosamine residues in a peptidoglycan and between N-acetyl-D-glucosamine residues in chitodextrins.. Functionally, lysozymes have primarily a bacteriolytic function; those in tissues and body fluids are associated with the monocyte-macrophage system and enhance the activity of immunoagents. This chain is Lysozyme C-1/C-2, found in Axis axis (Axis deer).